Consider the following 242-residue polypeptide: Dehydration-responsive element-binding protein 1J (242 aa).

Over residues S20–T29 the composition is skewed to low complexity. Residues S20–Q44 form a disordered region. The segment at residues V50–T109 is a DNA-binding region (AP2/ERF). Residues F143–T184 form a disordered region. Over residues S148–T184 the composition is skewed to low complexity.

It belongs to the AP2/ERF transcription factor family. ERF subfamily.

It localises to the nucleus. In terms of biological role, transcriptional activator that binds specifically to the DNA sequence 5'-[AG]CCGAC-3'. Binding to the C-repeat/DRE element mediates high salinity- and dehydration-inducible transcription. The chain is Dehydration-responsive element-binding protein 1J (DREB1J) from Oryza sativa subsp. indica (Rice).